Reading from the N-terminus, the 51-residue chain is Large ribosomal subunit protein eL39 (51 aa).

Belongs to the eukaryotic ribosomal protein eL39 family.

Its function is as follows. Binds specifically to a region in 26S rRNA near the subunit interface. This is Large ribosomal subunit protein eL39 (rpl39e) from Sulfolobus acidocaldarius (strain ATCC 33909 / DSM 639 / JCM 8929 / NBRC 15157 / NCIMB 11770).